We begin with the raw amino-acid sequence, 1178 residues long: DNA-directed RNA polymerase subunit beta (1178 aa).

Residues 1–37 (MLEGCILADSRQSKTAASPSPSRPQSSSNNSVPGAPN) are disordered. Positions 18-33 (SPSPSRPQSSSNNSVP) are enriched in low complexity.

It belongs to the RNA polymerase beta chain family. In terms of assembly, the RNAP catalytic core consists of 2 alpha, 1 beta, 1 beta' and 1 omega subunit. When a sigma factor is associated with the core the holoenzyme is formed, which can initiate transcription.

It carries out the reaction RNA(n) + a ribonucleoside 5'-triphosphate = RNA(n+1) + diphosphate. Functionally, DNA-dependent RNA polymerase catalyzes the transcription of DNA into RNA using the four ribonucleoside triphosphates as substrates. The polypeptide is DNA-directed RNA polymerase subunit beta (Mycobacterium tuberculosis (strain CDC 1551 / Oshkosh)).